Here is a 624-residue protein sequence, read N- to C-terminus: Methyl-accepting chemotaxis protein McpG (624 aa).

A helical transmembrane segment spans residues 11–31 (ILLAASLIVILAFSLFTLYND). In terms of domain architecture, Cache spans 36-254 (NAIREDLENY…GLPSANWYIG (219 aa)). A helical transmembrane segment spans residues 272 to 292 (SAVIATVVAVVIIIGLLGLLI). The region spanning 293-347 (RVLMQPLHTMTRAMEDIAEGEGDLTKRLHIHSHDEFGVLGNAFNRFVERIHSSIR) is the HAMP domain. One can recognise a Methyl-accepting transducer domain in the interval 352–588 (ATEQVNEVAL…AINMDINEIN (237 aa)).

It belongs to the methyl-accepting chemotaxis (MCP) protein family.

It is found in the cell membrane. Functionally, chemotactic-signal transducers respond to changes in the concentration of attractants and repellents in the environment, transduce a signal from the outside to the inside of the cell, and facilitate sensory adaptation through the variation of the level of methylation. McpG is a specific gamma-aminobutyric acid (GABA) chemoreceptor that recognizes GABA over a wide range of environmental conditions. Contributes to attraction to and colonization of plant roots. The sequence is that of Methyl-accepting chemotaxis protein McpG from Pseudomonas putida (strain ATCC 47054 / DSM 6125 / CFBP 8728 / NCIMB 11950 / KT2440).